We begin with the raw amino-acid sequence, 386 residues long: Putative aminotransferase YugH (386 aa).

At K234 the chain carries N6-(pyridoxal phosphate)lysine.

Belongs to the class-I pyridoxal-phosphate-dependent aminotransferase family. Pyridoxal 5'-phosphate serves as cofactor.

It localises to the cytoplasm. This chain is Putative aminotransferase YugH (yugH), found in Bacillus subtilis (strain 168).